Here is a 545-residue protein sequence, read N- to C-terminus: Chaperonin GroEL 2 (545 aa).

Residues 29 to 32, 86 to 90, Gly413, 479 to 481, and Asp495 contribute to the ATP site; these read TLGP, DGTTT, and NAA.

Belongs to the chaperonin (HSP60) family. In terms of assembly, forms a cylinder of 14 subunits composed of two heptameric rings stacked back-to-back. Interacts with the co-chaperonin GroES.

Its subcellular location is the cytoplasm. It carries out the reaction ATP + H2O + a folded polypeptide = ADP + phosphate + an unfolded polypeptide.. Functionally, together with its co-chaperonin GroES, plays an essential role in assisting protein folding. The GroEL-GroES system forms a nano-cage that allows encapsulation of the non-native substrate proteins and provides a physical environment optimized to promote and accelerate protein folding. The chain is Chaperonin GroEL 2 from Prochlorococcus marinus (strain AS9601).